A 735-amino-acid polypeptide reads, in one-letter code: uncharacterized protein (735 aa).

One can recognise a GAF domain in the interval 25 to 175 (DLSCLSPDLL…CIAAVLAGLL (151 aa)). The region spanning 185-255 (SEAARRAMLD…RQGFMRHLAT (71 aa)) is the PAS domain. A PAC domain is found at 263–313 (RLVEVEALRADGSVFPAELTVNEHRAGGRRLFSAFVRDISDRITSRRALER). The GGDEF domain maps to 342–464 (GAVVLMLRDL…DGHLLHFAEH (123 aa)). In terms of domain architecture, EAL spans 472–732 (RLELEMALRD…VAGTLPETLA (261 aa)).

This is an uncharacterized protein from Azorhizobium caulinodans (strain ATCC 43989 / DSM 5975 / JCM 20966 / LMG 6465 / NBRC 14845 / NCIMB 13405 / ORS 571).